A 311-amino-acid chain; its full sequence is Cyclin-dependent kinase B1-2 (311 aa).

One can recognise a Protein kinase domain in the interval Y4 to F303. ATP contacts are provided by residues V10–V18 and K33. Phosphotyrosine is present on Y15. Catalysis depends on D144, which acts as the Proton acceptor. The residue at position 178 (T178) is a Phosphothreonine.

The protein belongs to the protein kinase superfamily. CMGC Ser/Thr protein kinase family. CDC2/CDKX subfamily. In terms of assembly, interacts with CKS1. Expressed in flowers.

The catalysed reaction is L-seryl-[protein] + ATP = O-phospho-L-seryl-[protein] + ADP + H(+). It carries out the reaction L-threonyl-[protein] + ATP = O-phospho-L-threonyl-[protein] + ADP + H(+). The enzyme catalyses [DNA-directed RNA polymerase] + ATP = phospho-[DNA-directed RNA polymerase] + ADP + H(+). Its function is as follows. Together with CDKB1-1, promotes both the last division in the stomatal cell lineage as well as the number of stomata. In collaboration with MYB124 and MYB88, restrict the G1/S transition and chloroplast and nuclear number during stomatal formation, and normally maintain fate and developmental progression throughout the stomatal cell lineage. The polypeptide is Cyclin-dependent kinase B1-2 (CDKB1-2) (Arabidopsis thaliana (Mouse-ear cress)).